The following is a 341-amino-acid chain: HTH-type transcriptional repressor PurR (341 aa).

In terms of domain architecture, HTH lacI-type spans 2 to 56 (ATIKDVAKHAGVSTTTVSHVINKTRFVAENTKAAVWAAIKELHYSPSAVARSLKV). Residues 4-23 (IKDVAKHAGVSTTTVSHVIN) constitute a DNA-binding region (H-T-H motif). The DNA-binding element occupies 48-56 (SAVARSLKV). Residues Tyr73, Arg190, Thr192, Phe221, and Asp275 each contribute to the hypoxanthine site.

In terms of assembly, homodimer.

The protein operates within purine metabolism; purine nucleotide biosynthesis [regulation]. Is the main repressor of the genes involved in the de novo synthesis of purine nucleotides, regulating purB, purC, purEK, purF, purHD, purL, purMN and guaBA expression. PurR is allosterically activated to bind its cognate DNA by binding the purine corepressors, hypoxanthine or guanine, thereby effecting transcription repression. In Yersinia enterocolitica serotype O:8 / biotype 1B (strain NCTC 13174 / 8081), this protein is HTH-type transcriptional repressor PurR.